Here is a 76-residue protein sequence, read N- to C-terminus: Small ribosomal subunit protein bS18 (76 aa).

It belongs to the bacterial ribosomal protein bS18 family. In terms of assembly, part of the 30S ribosomal subunit. Forms a tight heterodimer with protein bS6.

Its function is as follows. Binds as a heterodimer with protein bS6 to the central domain of the 16S rRNA, where it helps stabilize the platform of the 30S subunit. This Neisseria gonorrhoeae (strain ATCC 700825 / FA 1090) protein is Small ribosomal subunit protein bS18.